Here is a 154-residue protein sequence, read N- to C-terminus: Ribonuclease 8 (154 aa).

Residues 1–27 (MAPARAGCCPLLLLLLGLWVAEVLVRA) form the signal peptide. His42 serves as the catalytic Proton acceptor. Intrachain disulfides connect Cys50–Cys93, Cys64–Cys118, Cys82–Cys133, and Cys89–Cys96. Residues 65 to 69 (KDLNT) and Lys90 contribute to the substrate site. Residue His149 is the Proton donor of the active site.

This sequence belongs to the pancreatic ribonuclease family. In terms of tissue distribution, expressed prominently in the placenta and is not detected in any other tissues examined.

It localises to the secreted. Functionally, has a low ribonuclease activity. The sequence is that of Ribonuclease 8 (RNASE8) from Homo sapiens (Human).